Here is a 256-residue protein sequence, read N- to C-terminus: Acetyl-coenzyme A carboxylase carboxyl transferase subunit alpha (256 aa).

The CoA carboxyltransferase C-terminal domain occupies 1-236; that stretch reads MTKITRIVRE…KQELLVELEQ (236 aa).

This sequence belongs to the AccA family. Acetyl-CoA carboxylase is a heterohexamer composed of biotin carboxyl carrier protein (AccB), biotin carboxylase (AccC) and two subunits each of ACCase subunit alpha (AccA) and ACCase subunit beta (AccD).

Its subcellular location is the cytoplasm. The enzyme catalyses N(6)-carboxybiotinyl-L-lysyl-[protein] + acetyl-CoA = N(6)-biotinyl-L-lysyl-[protein] + malonyl-CoA. Its pathway is lipid metabolism; malonyl-CoA biosynthesis; malonyl-CoA from acetyl-CoA: step 1/1. Its function is as follows. Component of the acetyl coenzyme A carboxylase (ACC) complex. First, biotin carboxylase catalyzes the carboxylation of biotin on its carrier protein (BCCP) and then the CO(2) group is transferred by the carboxyltransferase to acetyl-CoA to form malonyl-CoA. The sequence is that of Acetyl-coenzyme A carboxylase carboxyl transferase subunit alpha from Streptococcus gordonii (strain Challis / ATCC 35105 / BCRC 15272 / CH1 / DL1 / V288).